A 264-amino-acid chain; its full sequence is Thymidylate synthase (264 aa).

DUMP is bound at residue arginine 21. Histidine 51 contributes to the (6R)-5,10-methylene-5,6,7,8-tetrahydrofolate binding site. 126 to 127 (RR) serves as a coordination point for dUMP. Cysteine 146 functions as the Nucleophile in the catalytic mechanism. Residues 166-169 (RSVD), asparagine 177, and 207-209 (HLY) contribute to the dUMP site. Residue aspartate 169 participates in (6R)-5,10-methylene-5,6,7,8-tetrahydrofolate binding. A (6R)-5,10-methylene-5,6,7,8-tetrahydrofolate-binding site is contributed by alanine 263.

It belongs to the thymidylate synthase family. Bacterial-type ThyA subfamily. In terms of assembly, homodimer.

Its subcellular location is the cytoplasm. The enzyme catalyses dUMP + (6R)-5,10-methylene-5,6,7,8-tetrahydrofolate = 7,8-dihydrofolate + dTMP. Its pathway is pyrimidine metabolism; dTTP biosynthesis. Catalyzes the reductive methylation of 2'-deoxyuridine-5'-monophosphate (dUMP) to 2'-deoxythymidine-5'-monophosphate (dTMP) while utilizing 5,10-methylenetetrahydrofolate (mTHF) as the methyl donor and reductant in the reaction, yielding dihydrofolate (DHF) as a by-product. This enzymatic reaction provides an intracellular de novo source of dTMP, an essential precursor for DNA biosynthesis. This is Thymidylate synthase from Geobacillus kaustophilus (strain HTA426).